The sequence spans 471 residues: ATP synthase subunit beta (471 aa).

ATP is bound at residue 156-163; it reads GGAGVGKT.

This sequence belongs to the ATPase alpha/beta chains family. In terms of assembly, F-type ATPases have 2 components, CF(1) - the catalytic core - and CF(0) - the membrane proton channel. CF(1) has five subunits: alpha(3), beta(3), gamma(1), delta(1), epsilon(1). CF(0) has three main subunits: a(1), b(2) and c(9-12). The alpha and beta chains form an alternating ring which encloses part of the gamma chain. CF(1) is attached to CF(0) by a central stalk formed by the gamma and epsilon chains, while a peripheral stalk is formed by the delta and b chains.

It localises to the cell inner membrane. It carries out the reaction ATP + H2O + 4 H(+)(in) = ADP + phosphate + 5 H(+)(out). Functionally, produces ATP from ADP in the presence of a proton gradient across the membrane. The catalytic sites are hosted primarily by the beta subunits. The polypeptide is ATP synthase subunit beta (Nitratidesulfovibrio vulgaris (strain DSM 19637 / Miyazaki F) (Desulfovibrio vulgaris)).